Here is a 543-residue protein sequence, read N- to C-terminus: Chaperonin GroEL (543 aa).

Residues 29–32 (TLGP), 86–90 (DGTTT), Gly-413, 478–480 (DAL), and Asp-494 contribute to the ATP site. The interval 524–543 (PEPEAPAVPAGMPGGMGGMY) is disordered.

The protein belongs to the chaperonin (HSP60) family. As to quaternary structure, forms a cylinder of 14 subunits composed of two heptameric rings stacked back-to-back. Interacts with the co-chaperonin GroES.

It is found in the cytoplasm. The enzyme catalyses ATP + H2O + a folded polypeptide = ADP + phosphate + an unfolded polypeptide.. Its function is as follows. Together with its co-chaperonin GroES, plays an essential role in assisting protein folding. The GroEL-GroES system forms a nano-cage that allows encapsulation of the non-native substrate proteins and provides a physical environment optimized to promote and accelerate protein folding. The protein is Chaperonin GroEL of Ruminiclostridium cellulolyticum (strain ATCC 35319 / DSM 5812 / JCM 6584 / H10) (Clostridium cellulolyticum).